We begin with the raw amino-acid sequence, 122 residues long: Large ribosomal subunit protein uL18 (122 aa).

This sequence belongs to the universal ribosomal protein uL18 family. In terms of assembly, part of the 50S ribosomal subunit; part of the 5S rRNA/L5/L18/L25 subcomplex. Contacts the 5S and 23S rRNAs.

In terms of biological role, this is one of the proteins that bind and probably mediate the attachment of the 5S RNA into the large ribosomal subunit, where it forms part of the central protuberance. The chain is Large ribosomal subunit protein uL18 from Pseudothermotoga lettingae (strain ATCC BAA-301 / DSM 14385 / NBRC 107922 / TMO) (Thermotoga lettingae).